The chain runs to 133 residues: Profilin-2 (133 aa).

A disulfide bridge connects residues Cys-13 and Cys-117. An Involved in PIP2 interaction motif is present at residues 83–99; the sequence is AVIRGKKGSGGITIKKT. Phosphothreonine is present on Thr-113.

The protein belongs to the profilin family. As to quaternary structure, occurs in many kinds of cells as a complex with monomeric actin in a 1:1 ratio. Post-translationally, phosphorylated by MAP kinases.

It localises to the cytoplasm. It is found in the cytoskeleton. Functionally, binds to actin and affects the structure of the cytoskeleton. At high concentrations, profilin prevents the polymerization of actin, whereas it enhances it at low concentrations. The chain is Profilin-2 from Betula pendula (European white birch).